Here is a 107-residue protein sequence, read N- to C-terminus: Large ribosomal subunit protein uL24 (107 aa).

The protein belongs to the universal ribosomal protein uL24 family. As to quaternary structure, part of the 50S ribosomal subunit.

Functionally, one of two assembly initiator proteins, it binds directly to the 5'-end of the 23S rRNA, where it nucleates assembly of the 50S subunit. In terms of biological role, one of the proteins that surrounds the polypeptide exit tunnel on the outside of the subunit. This chain is Large ribosomal subunit protein uL24, found in Caldanaerobacter subterraneus subsp. tengcongensis (strain DSM 15242 / JCM 11007 / NBRC 100824 / MB4) (Thermoanaerobacter tengcongensis).